We begin with the raw amino-acid sequence, 2792 residues long: E3 ubiquitin-protein ligase UBR5 (2792 aa).

An N-acetylthreonine modification is found at threonine 2. Residues 77 to 88 show a composition bias toward basic and acidic residues; it reads DRLELGKPDNND. The segment at 77 to 175 is disordered; the sequence is DRLELGKPDN…DRGSGLLGSQ (99 aa). Over residues 94–111 the composition is skewed to low complexity; that stretch reads SSSGTGRTSRPGRTSDSP. Residue serine 110 is modified to Phosphoserine. Gly residues predominate over residues 135 to 144; the sequence is GVGGSGGGSS. The UBA domain occupies 184 to 226; it reads VIPEELISQAQVVLQGKSRSVIIRELQRTNLDVNLAVNNLLSR. Serine 321 carries the phosphoserine modification. Residues 322–341 are compositionally biased toward basic and acidic residues; sequence FDNERGSTSKEGESNPDKKN. The segment at 322-347 is disordered; that stretch reads FDNERGSTSKEGESNPDKKNTPVQSP. A phosphoserine mark is found at serine 346 and serine 572. Residues 577–598 are compositionally biased toward basic and acidic residues; it reads KSMEKASKTLETKPESKQEPVK. A disordered region spans residues 577–642; sequence KSMEKASKTL…APREEEKVNE (66 aa). Residue serine 606 is modified to Phosphoserine. The span at 608–622 shows a compositional bias: low complexity; it reads ASTCSDASSIASSAS. A Phosphothreonine modification is found at threonine 631. Phosphoserine occurs at positions 802, 922, and 1012. 2 disordered regions span residues 993–1029 and 1046–1069; these read AGLG…SMDP and TAAT…EPSV. Residues 1011-1027 show a composition bias toward pro residues; it reads VSPPIAPPSWVPDPPSM. Over residues 1046–1067 the composition is skewed to polar residues; sequence TAATGSGQGPSTSTIPGPSTEP. 2 positions are modified to phosphothreonine: threonine 1109 and threonine 1129. The segment at 1171–1239 adopts a UBR-type zinc-finger fold; sequence DTCSFTWTGA…EKCKCKTLIA (69 aa). Phosphoserine occurs at positions 1221, 1302, 1349, 1369, and 1475. Positions 1293–1312 are disordered; the sequence is REDRNRKTASPEDSDMPDHD. A disordered region spans residues 1509-1734; sequence SVEPLPPRPS…PSSTSTPAAS (226 aa). Residues 1518–1531 are compositionally biased toward low complexity; that stretch reads SSDQASSSSQSQSS. Residues 1532 to 1547 are compositionally biased toward polar residues; sequence YIIRNPQQRRISQSQP. Serine 1543 is modified (phosphoserine). 2 stretches are compositionally biased toward acidic residues: residues 1553 to 1568 and 1599 to 1608; these read EEQD…EVEV and HDEDGSDMEL. The segment covering 1623 to 1632 has biased composition (polar residues); it reads NHSNQDNASG. Low complexity-rich tracts occupy residues 1635–1651, 1662–1675, and 1720–1734; these read SVVT…ASSV, SNDS…SSQS, and AAST…PAAS. Threonine 1730 is subject to Phosphothreonine. Serine 1735 bears the Phosphoserine mark. Tyrosine 1740 bears the Phosphotyrosine mark. Serine 1774 carries the post-translational modification Phosphoserine. Residues 1853 to 1884 form a disordered region; that stretch reads LASAGDPGHPNHPLHASQNSARRERMTAREEA. Positions 1873-1884 are enriched in basic and acidic residues; the sequence is ARRERMTAREEA. A Phosphothreonine modification is found at threonine 1963. The tract at residues 1978-2015 is disordered; that stretch reads GIDNEDSEHENDDDTSQSATLNDKDDDSLPAETGQNHP. The span at 1979–1992 shows a compositional bias: acidic residues; the sequence is IDNEDSEHENDDDT. 3 positions are modified to phosphoserine: serine 1984, serine 2020, and serine 2022. The residue at position 2024 (threonine 2024) is a Phosphothreonine. Serine 2070 carries the post-translational modification Phosphoserine. Residues 2111-2137 are disordered; the sequence is RQKKEGEEQSLLAEEADSSKPGPSAPD. Threonine 2207 is subject to Phosphothreonine. 2 positions are modified to phosphoserine: serine 2235 and serine 2283. Residues 2317–2387 form a disordered region; the sequence is HTSLMQRLRN…SDDPDPLPAH (71 aa). Basic and acidic residues-rich tracts occupy residues 2326–2342 and 2350–2362; these read NRGE…EMRR and SRRD…RRQL. A PABC domain is found at 2371 to 2448; it reads PASEGNPSDD…AMELIIAHGR (78 aa). Residues 2455–2792 form the HECT domain; it reads ILDLGLLDSS…AIKTKNFGFV (338 aa). Phosphoserine is present on residues serine 2463, serine 2477, and serine 2479. Residues 2467–2494 are disordered; sequence VQENRKRHGSSRSVVDMDLEDTDDGDDN. The span at 2483–2493 shows a compositional bias: acidic residues; the sequence is MDLEDTDDGDD. Residue cysteine 2761 is the Glycyl thioester intermediate of the active site.

Belongs to the UBR5 family. Homotetramer; composed of a dimer of dimers. Associates with CDK9 and TFIIS/TCEA1 and forms a transcription regulatory complex made of CDK9, RNAP II, UBR5 and TFIIS/TCEA1 that can stimulate target gene transcription (e.g. gamma fibrinogen/FGG) by recruiting their promoters. Associates with the E3 ligase complex containing DYRK2, EDD/UBR5, DDB1 and DCAF1 proteins (EDVP complex). Binds TOPBP1. Interacts with PIH1D1. Interacts with CIB1.

It localises to the nucleus. The protein resides in the cytoplasm. It catalyses the reaction S-ubiquitinyl-[E2 ubiquitin-conjugating enzyme]-L-cysteine + [acceptor protein]-L-lysine = [E2 ubiquitin-conjugating enzyme]-L-cysteine + N(6)-ubiquitinyl-[acceptor protein]-L-lysine.. Its pathway is protein modification; protein ubiquitination. In terms of biological role, E3 ubiquitin-protein ligase involved in different protein quality control pathways in the cytoplasm and nucleus. Mainly acts as a ubiquitin chain elongator that extends pre-ubiquitinated substrates. Component of the N-end rule pathway: ubiquitinates proteins bearing specific N-terminal residues that are destabilizing according to the N-end rule, leading to their degradation. Recognizes type-1 N-degrons, containing positively charged amino acids (Arg, Lys and His). Together with UBR4, part of a cytoplasm protein quality control pathway that prevents protein aggregation by catalyzing assembly of heterotypic 'Lys-11'-/'Lys-48'-linked branched ubiquitin chains on aggregated proteins, leading to substrate recognition by the segregase p97/VCP and degradation by the proteasome: UBR5 is probably branching multiple 'Lys-48'-linked chains of substrates initially modified with mixed conjugates by UBR4. Together with ITCH, catalyzes 'Lys-48'-/'Lys-63'-branched ubiquitination of TXNIP, leading to its degradation: UBR5 mediates branching of 'Lys-48'-linked chains of substrates initially modified with 'Lys-63'-linked conjugates by ITCH. Catalytic component of a nuclear protein quality control pathway that mediates ubiquitination and degradation of unpaired transcription factors (i.e. transcription factors that are not assembled into functional multiprotein complexes): specifically recognizes and binds degrons that are not accessible when transcription regulators are associated with their coactivators. Ubiquitinates various unpaired transcription regulator (MYC, SUPT4H1, SUPT5H, CDC20 and MCRS1), as well as ligand-bound nuclear receptors (ESR1, NR1H3, NR3C1, PGR, RARA, RXRA AND VDR) that are not associated with their nuclear receptor coactivators (NCOAs). Involved in maturation and/or transcriptional regulation of mRNA by mediating polyubiquitination and activation of CDK9. Also acts as a regulator of DNA damage response by acting as a suppressor of RNF168, an E3 ubiquitin-protein ligase that promotes accumulation of 'Lys-63'-linked histone H2A and H2AX at DNA damage sites, thereby acting as a guard against excessive spreading of ubiquitinated chromatin at damaged chromosomes. Regulates DNA topoisomerase II binding protein (TopBP1) in the DNA damage response. Ubiquitinates acetylated PCK1. Acts as a positive regulator of the canonical Wnt signaling pathway by mediating (1) ubiquitination and stabilization of CTNNB1, and (2) 'Lys-48'-linked ubiquitination and degradation of TLE3. Promotes disassembly of the mitotic checkpoint complex (MCC) from the APC/C complex by catalyzing ubiquitination of BUB1B, BUB3 and CDC20. Plays an essential role in extraembryonic development. Required for the maintenance of skeletal tissue homeostasis by acting as an inhibitor of hedgehog (HH) signaling. The protein is E3 ubiquitin-protein ligase UBR5 of Mus musculus (Mouse).